The following is a 319-amino-acid chain: Transcription factor jun-1 (319 aa).

2 disordered regions span residues 1-52 and 216-264; these read MEED…EKES and NGVN…CRQK. Residues 8 to 19 show a composition bias toward low complexity; sequence PPSSSTSSESPE. Residues 28-38 show a composition bias toward basic residues; sequence PTRRRKNSKKD. Positions 244 to 285 are basic motif; the sequence is KKKLERKRARNRQAATKCRQKKMDRIKELEEQVLHEKHRGQR. A bZIP domain is found at 244 to 307; sequence KKKLERKRAR…EHFRRTVEHH (64 aa). Residues 286-293 are leucine-zipper; it reads LDAELLEL.

Belongs to the bZIP family. Jun subfamily. As to quaternary structure, heterodimer; with fos-1. Isoform a, isoform b, isoform c and isoform d are expressed in the spermatheca.

It localises to the nucleus. In terms of biological role, transcription factor that recognizes and binds to the AP-1 non-canonical enhancer heptamer motif 5'-TTAGTCA-3'. Required for ovulation. Controls plc-1 expression in the spermatheca to regulate spermathecal valve dilation. This Caenorhabditis elegans protein is Transcription factor jun-1.